A 344-amino-acid polypeptide reads, in one-letter code: uncharacterized protein (344 aa).

The NADP(+) site is built by lysine 38 and tyrosine 167.

This sequence belongs to the NAD(P)-dependent epimerase/dehydratase family. Dihydroflavonol-4-reductase subfamily.

This is an uncharacterized protein from Saccharomyces cerevisiae (strain ATCC 204508 / S288c) (Baker's yeast).